The chain runs to 299 residues: uncharacterized protein (299 aa).

This is an uncharacterized protein from Acanthamoeba polyphaga mimivirus (APMV).